A 370-amino-acid polypeptide reads, in one-letter code: ADP-ribosylation factor-like protein 13B (370 aa).

Residues C12, C13, C14, and C15 are each lipidated (S-palmitoyl cysteine). GTP-binding positions include 31 to 38 (GIGSAGKT), 75 to 79 (DVGGD), and 134 to 137 (NNQN). K239 is covalently cross-linked (Glycyl lysine isopeptide (Lys-Gly) (interchain with G-Cter in SUMO)). Residues 255–331 (RNQPPVQPPI…PVSPESNSVK (77 aa)) are disordered. The segment covering 259–271 (PVQPPIPPDPPSD) has biased composition (pro residues). Composition is skewed to polar residues over residues 287–303 (LASSTIPSDIIQSTPET) and 314–328 (RISQTSTKPVSPESN). A Glycyl lysine isopeptide (Lys-Gly) (interchain with G-Cter in SUMO) cross-link involves residue K331. The interval 366 to 369 (RVVP) is RVVP region.

Belongs to the small GTPase superfamily. Arf family. In terms of assembly, monomer. Sumoylation regulates the targeting of membrane sensory receptors to the cilium. As to expression, specifically expressed in ciliated sensory neurons throughout development in both hermaphrodites.

The protein resides in the cell projection. It is found in the cilium membrane. Functionally, cilium-specific protein required to control the microtubule-based, ciliary axoneme structure. Required for normal sensory cilium function. May act by maintaining the association between IFT subcomplexes A and B. In Caenorhabditis elegans, this protein is ADP-ribosylation factor-like protein 13B (arl-13).